Consider the following 220-residue polypeptide: Charged multivesicular body protein 2a (220 aa).

Coiled-coil stretches lie at residues 12 to 53 and 199 to 220; these read EEML…MAKQ and PSAA…LRRD. Residues 179–208 are disordered; sequence LSNLPSTGGSLSVAGAKKGEPSAALADADA. The MIT-interacting motif signature appears at 208–218; sequence ADLEERLNNLR.

The protein belongs to the SNF7 family. As to quaternary structure, probable core component of the endosomal sorting required for transport complex III (ESCRT-III). ESCRT-III components are thought to multimerize to form a flat lattice on the perimeter membrane of the endosome.

It localises to the late endosome membrane. It is found in the cytoplasm. Functionally, probable core component of the endosomal sorting required for transport complex III (ESCRT-III) which is involved in multivesicular bodies (MVBs) formation and sorting of endosomal cargo proteins into MVBs. MVBs contain intraluminal vesicles (ILVs) that are generated by invagination and scission from the limiting membrane of the endosome and mostly are delivered to lysosomes enabling degradation of membrane proteins, such as stimulated growth factor receptors, lysosomal enzymes and lipids. This is Charged multivesicular body protein 2a (chmp2a) from Xenopus tropicalis (Western clawed frog).